The following is a 159-amino-acid chain: SsrA-binding protein (159 aa).

The segment covering 131–148 (YDKRQTLREKQDRREAER) has biased composition (basic and acidic residues). The tract at residues 131-159 (YDKRQTLREKQDRREAERTISAIKRKQRA) is disordered.

This sequence belongs to the SmpB family.

The protein resides in the cytoplasm. Required for rescue of stalled ribosomes mediated by trans-translation. Binds to transfer-messenger RNA (tmRNA), required for stable association of tmRNA with ribosomes. tmRNA and SmpB together mimic tRNA shape, replacing the anticodon stem-loop with SmpB. tmRNA is encoded by the ssrA gene; the 2 termini fold to resemble tRNA(Ala) and it encodes a 'tag peptide', a short internal open reading frame. During trans-translation Ala-aminoacylated tmRNA acts like a tRNA, entering the A-site of stalled ribosomes, displacing the stalled mRNA. The ribosome then switches to translate the ORF on the tmRNA; the nascent peptide is terminated with the 'tag peptide' encoded by the tmRNA and targeted for degradation. The ribosome is freed to recommence translation, which seems to be the essential function of trans-translation. This is SsrA-binding protein from Streptomyces coelicolor (strain ATCC BAA-471 / A3(2) / M145).